The following is a 217-amino-acid chain: 3,4-dihydroxy-2-butanone 4-phosphate synthase (217 aa).

Residues 37–38 (RE), D42, 150–154 (RGGHT), and E174 contribute to the D-ribulose 5-phosphate site. A Mg(2+)-binding site is contributed by E38. H153 contributes to the Mg(2+) binding site.

This sequence belongs to the DHBP synthase family. As to quaternary structure, homodimer. Mg(2+) serves as cofactor. Requires Mn(2+) as cofactor.

It catalyses the reaction D-ribulose 5-phosphate = (2S)-2-hydroxy-3-oxobutyl phosphate + formate + H(+). It functions in the pathway cofactor biosynthesis; riboflavin biosynthesis; 2-hydroxy-3-oxobutyl phosphate from D-ribulose 5-phosphate: step 1/1. Functionally, catalyzes the conversion of D-ribulose 5-phosphate to formate and 3,4-dihydroxy-2-butanone 4-phosphate. The sequence is that of 3,4-dihydroxy-2-butanone 4-phosphate synthase from Salmonella heidelberg (strain SL476).